The sequence spans 375 residues: Trichodiene synthase (375 aa).

Belongs to the trichodiene synthase family.

The enzyme catalyses (2E,6E)-farnesyl diphosphate = trichodiene + diphosphate. Its pathway is sesquiterpene biosynthesis; trichothecene biosynthesis. Functionally, TS is a member of the terpene cyclase group of enzymes. It catalyzes the isomerization and cyclization of farnesyl pyro-phosphate to form trichodiene, the first cyclic intermediate in the biosynthetic pathway for trichothecenes. It serves to branch trichothecene biosynthesis from the isoprenoid pathway. The polypeptide is Trichodiene synthase (TRI5) (Fusarium cerealis (Fusarium crookwellense)).